The sequence spans 217 residues: Ranaspumin (217 aa).

4 cysteine pairs are disulfide-bonded: Cys18–Cys67, Cys38–Cys114, Cys125–Cys168, and Cys146–Cys207.

Monomer. Exclusively expressed in females in the early oviduct, the glandular part of the oviduct (pars convoluta dilata) and in the cloaca.

The protein localises to the secreted. Acts as a surfactant. Is the major protein constituent (45%) of foam nests. Has no antimicrobial activity, no larvicidal activity, and is not toxic to mice. The polypeptide is Ranaspumin (Leptodactylus vastus (Northeastern pepper frog)).